Consider the following 180-residue polypeptide: ATP synthase subunit delta (180 aa).

Belongs to the ATPase delta chain family. In terms of assembly, F-type ATPases have 2 components, F(1) - the catalytic core - and F(0) - the membrane proton channel. F(1) has five subunits: alpha(3), beta(3), gamma(1), delta(1), epsilon(1). F(0) has three main subunits: a(1), b(2) and c(10-14). The alpha and beta chains form an alternating ring which encloses part of the gamma chain. F(1) is attached to F(0) by a central stalk formed by the gamma and epsilon chains, while a peripheral stalk is formed by the delta and b chains.

Its subcellular location is the cell inner membrane. F(1)F(0) ATP synthase produces ATP from ADP in the presence of a proton or sodium gradient. F-type ATPases consist of two structural domains, F(1) containing the extramembraneous catalytic core and F(0) containing the membrane proton channel, linked together by a central stalk and a peripheral stalk. During catalysis, ATP synthesis in the catalytic domain of F(1) is coupled via a rotary mechanism of the central stalk subunits to proton translocation. Functionally, this protein is part of the stalk that links CF(0) to CF(1). It either transmits conformational changes from CF(0) to CF(1) or is implicated in proton conduction. This Citrifermentans bemidjiense (strain ATCC BAA-1014 / DSM 16622 / JCM 12645 / Bem) (Geobacter bemidjiensis) protein is ATP synthase subunit delta.